Here is a 506-residue protein sequence, read N- to C-terminus: Apolipoprotein N-acyltransferase (506 aa).

The next 6 helical transmembrane spans lie at 24 to 44, 58 to 78, 85 to 105, 125 to 145, 162 to 182, and 192 to 212; these read LALA…MFYL, GWCY…VSIH, ALLA…FFAL, LAFA…LTGF, LAPV…AALL, and KSFL…GLAL. Residues 230–470 enclose the CN hydrolase domain; that stretch reads MQGNIEQSMK…RGVLYGEVVP (241 aa). Glutamate 269 acts as the Proton acceptor in catalysis. The active site involves lysine 330. The active-site Nucleophile is the cysteine 382. The helical transmembrane segment at 482–502 threads the bilayer; the sequence is SWPLAIVCLLLFGWALLAARI.

Belongs to the CN hydrolase family. Apolipoprotein N-acyltransferase subfamily.

The protein localises to the cell inner membrane. It catalyses the reaction N-terminal S-1,2-diacyl-sn-glyceryl-L-cysteinyl-[lipoprotein] + a glycerophospholipid = N-acyl-S-1,2-diacyl-sn-glyceryl-L-cysteinyl-[lipoprotein] + a 2-acyl-sn-glycero-3-phospholipid + H(+). Its pathway is protein modification; lipoprotein biosynthesis (N-acyl transfer). Catalyzes the phospholipid dependent N-acylation of the N-terminal cysteine of apolipoprotein, the last step in lipoprotein maturation. The polypeptide is Apolipoprotein N-acyltransferase (Pseudomonas syringae pv. tomato (strain ATCC BAA-871 / DC3000)).